A 507-amino-acid polypeptide reads, in one-letter code: ATP synthase subunit alpha, chloroplastic (507 aa).

Residue 170–177 coordinates ATP; it reads GDRQTGKT.

Belongs to the ATPase alpha/beta chains family. F-type ATPases have 2 components, CF(1) - the catalytic core - and CF(0) - the membrane proton channel. CF(1) has five subunits: alpha(3), beta(3), gamma(1), delta(1), epsilon(1). CF(0) has four main subunits: a, b, b' and c.

The protein localises to the plastid. It localises to the chloroplast thylakoid membrane. It carries out the reaction ATP + H2O + 4 H(+)(in) = ADP + phosphate + 5 H(+)(out). Functionally, produces ATP from ADP in the presence of a proton gradient across the membrane. The alpha chain is a regulatory subunit. This Nymphaea alba (White water-lily) protein is ATP synthase subunit alpha, chloroplastic.